We begin with the raw amino-acid sequence, 384 residues long: S-adenosylmethionine synthase (384 aa).

His-15 is an ATP binding site. Position 17 (Asp-17) interacts with Mg(2+). A K(+)-binding site is contributed by Glu-43. L-methionine-binding residues include Glu-56 and Gln-99. The interval 99–109 (QSADINQGVDR) is flexible loop. Residues 164-166 (DAK), 230-231 (RF), Asp-239, 245-246 (RK), Ala-262, and Lys-266 contribute to the ATP site. Residue Asp-239 coordinates L-methionine. Residue Lys-270 participates in L-methionine binding.

It belongs to the AdoMet synthase family. As to quaternary structure, homotetramer; dimer of dimers. The cofactor is Mg(2+). Requires K(+) as cofactor.

The protein localises to the cytoplasm. It catalyses the reaction L-methionine + ATP + H2O = S-adenosyl-L-methionine + phosphate + diphosphate. It participates in amino-acid biosynthesis; S-adenosyl-L-methionine biosynthesis; S-adenosyl-L-methionine from L-methionine: step 1/1. In terms of biological role, catalyzes the formation of S-adenosylmethionine (AdoMet) from methionine and ATP. The overall synthetic reaction is composed of two sequential steps, AdoMet formation and the subsequent tripolyphosphate hydrolysis which occurs prior to release of AdoMet from the enzyme. This Haemophilus influenzae (strain PittEE) protein is S-adenosylmethionine synthase.